Reading from the N-terminus, the 34-residue chain is Photosystem II reaction center protein M (34 aa).

A helical membrane pass occupies residues isoleucine 5–leucine 25.

Belongs to the PsbM family. PSII is composed of 1 copy each of membrane proteins PsbA, PsbB, PsbC, PsbD, PsbE, PsbF, PsbH, PsbI, PsbJ, PsbK, PsbL, PsbM, PsbT, PsbX, PsbY, PsbZ, Psb30/Ycf12, at least 3 peripheral proteins of the oxygen-evolving complex and a large number of cofactors. It forms dimeric complexes.

The protein localises to the plastid. It localises to the chloroplast thylakoid membrane. Functionally, one of the components of the core complex of photosystem II (PSII). PSII is a light-driven water:plastoquinone oxidoreductase that uses light energy to abstract electrons from H(2)O, generating O(2) and a proton gradient subsequently used for ATP formation. It consists of a core antenna complex that captures photons, and an electron transfer chain that converts photonic excitation into a charge separation. This subunit is found at the monomer-monomer interface. The sequence is that of Photosystem II reaction center protein M from Angiopteris evecta (Mule's foot fern).